Reading from the N-terminus, the 210-residue chain is Thymidylate kinase (210 aa).

Residue 10–17 (GPEGAGKS) participates in ATP binding.

This sequence belongs to the thymidylate kinase family.

It catalyses the reaction dTMP + ATP = dTDP + ADP. In terms of biological role, phosphorylation of dTMP to form dTDP in both de novo and salvage pathways of dTTP synthesis. The protein is Thymidylate kinase of Pseudomonas syringae pv. tomato (strain ATCC BAA-871 / DC3000).